The following is a 117-amino-acid chain: Large ribosomal subunit protein uL18 (117 aa).

This sequence belongs to the universal ribosomal protein uL18 family. As to quaternary structure, part of the 50S ribosomal subunit; part of the 5S rRNA/L5/L18/L25 subcomplex. Contacts the 5S and 23S rRNAs.

This is one of the proteins that bind and probably mediate the attachment of the 5S RNA into the large ribosomal subunit, where it forms part of the central protuberance. The chain is Large ribosomal subunit protein uL18 from Glaesserella parasuis serovar 5 (strain SH0165) (Haemophilus parasuis).